The following is a 182-amino-acid chain: Ribosome maturation factor RimM (182 aa).

The region spanning 102 to 182 (EEGDYYWKDL…SIEVDWDPGF (81 aa)) is the PRC barrel domain.

It belongs to the RimM family. In terms of assembly, binds ribosomal protein uS19.

The protein localises to the cytoplasm. An accessory protein needed during the final step in the assembly of 30S ribosomal subunit, possibly for assembly of the head region. Essential for efficient processing of 16S rRNA. May be needed both before and after RbfA during the maturation of 16S rRNA. It has affinity for free ribosomal 30S subunits but not for 70S ribosomes. This is Ribosome maturation factor RimM from Escherichia fergusonii (strain ATCC 35469 / DSM 13698 / CCUG 18766 / IAM 14443 / JCM 21226 / LMG 7866 / NBRC 102419 / NCTC 12128 / CDC 0568-73).